Consider the following 315-residue polypeptide: tRNA pseudouridine synthase B (315 aa).

The Nucleophile role is filled by Asp-54.

The protein belongs to the pseudouridine synthase TruB family. Type 1 subfamily.

The catalysed reaction is uridine(55) in tRNA = pseudouridine(55) in tRNA. In terms of biological role, responsible for synthesis of pseudouridine from uracil-55 in the psi GC loop of transfer RNAs. In Cupriavidus pinatubonensis (strain JMP 134 / LMG 1197) (Cupriavidus necator (strain JMP 134)), this protein is tRNA pseudouridine synthase B.